Consider the following 198-residue polypeptide: Small ribosomal subunit protein uS7 (198 aa).

The protein belongs to the universal ribosomal protein uS7 family. As to quaternary structure, part of the 30S ribosomal subunit.

One of the primary rRNA binding proteins, it binds directly to 16S rRNA where it nucleates assembly of the head domain of the 30S subunit. Is located at the subunit interface close to the decoding center. The chain is Small ribosomal subunit protein uS7 from Nanoarchaeum equitans (strain Kin4-M).